Consider the following 100-residue polypeptide: Urease subunit gamma (100 aa).

It belongs to the urease gamma subunit family. As to quaternary structure, heterotrimer of UreA (gamma), UreB (beta) and UreC (alpha) subunits. Three heterotrimers associate to form the active enzyme.

The protein localises to the cytoplasm. It carries out the reaction urea + 2 H2O + H(+) = hydrogencarbonate + 2 NH4(+). It participates in nitrogen metabolism; urea degradation; CO(2) and NH(3) from urea (urease route): step 1/1. The protein is Urease subunit gamma of Clostridium perfringens.